The sequence spans 633 residues: DNA mismatch repair protein MutL (633 aa).

It belongs to the DNA mismatch repair MutL/HexB family.

In terms of biological role, this protein is involved in the repair of mismatches in DNA. It is required for dam-dependent methyl-directed DNA mismatch repair. May act as a 'molecular matchmaker', a protein that promotes the formation of a stable complex between two or more DNA-binding proteins in an ATP-dependent manner without itself being part of a final effector complex. The polypeptide is DNA mismatch repair protein MutL (Macrococcus caseolyticus (strain JCSC5402) (Macrococcoides caseolyticum)).